The following is a 147-amino-acid chain: Hemoglobin subunit epsilon (147 aa).

Positions 3–147 (HFTAEEKNAI…VANALAHKYH (145 aa)) constitute a Globin domain. Ser-51 bears the Phosphoserine mark. Residues His-64 and His-93 each coordinate heme b.

The protein belongs to the globin family. As to quaternary structure, heterotetramer of two alpha chains and two epsilon chains in early embryonic hemoglobin Gower-2; two zeta chains and two epsilon chains in early embryonic hemoglobin Gower-1. As to expression, red blood cells.

In terms of biological role, the epsilon chain is a beta-type chain of early mammalian embryonic hemoglobin. The protein is Hemoglobin subunit epsilon (HBE1) of Sminthopsis crassicaudata (Fat-tailed dunnart).